The following is a 1285-amino-acid chain: Ataxin-2 (1285 aa).

Disordered regions lie at residues 1–85 (MRSS…PGSR), 111–178 (ARAC…SPGA), and 197–224 (PVASSSAAAGGGRPGLGRGRNSSKGLPQ). Positions 29–38 (SLPRTARRGG) are enriched in basic residues. The segment covering 48–65 (AGPPPRGPGAPPRGPRSP) has biased composition (pro residues). A compositionally biased stretch (low complexity) spans 128-144 (SSSARPAPGCPRPACEP). Positions 205-214 (AGGGRPGLGR) are enriched in gly residues. Phosphoserine is present on residues S218 and S219. The 78-residue stretch at 237–314 (RMVHILTSVV…FVVVQFKDTD (78 aa)) folds into the Sm domain. 2 positions are modified to phosphoserine: S362 and S435. Composition is skewed to basic and acidic residues over residues 428–440 (ALENDDRSEEEKY) and 447–461 (CSDREGHGPNTRDNK). Disordered stretches follow at residues 428–925 (ALEN…HQQP) and 1111–1191 (AALH…QSSF). At S477 the chain carries Phosphoserine. Over residues 498 to 510 (ASHTSDFNPNAGS) the composition is skewed to polar residues. Position 523 is a phosphoserine (S523). Over residues 526 to 552 (PSHSSRPPSRYQSGPNSLPPRAATHTR) the composition is skewed to low complexity. The segment covering 554-567 (PSRPPSRPSRPPSH) has biased composition (pro residues). Residue S593 is modified to Phosphoserine. Basic residues predominate over residues 596–606 (AQRHPRNHRVS). An Asymmetric dimethylarginine; alternate modification is found at R609. Position 609 is an omega-N-methylarginine; alternate (R609). 2 positions are modified to phosphoserine: S611 and S653. Over residues 662 to 672 (PRQSSIGNSPS) the composition is skewed to polar residues. A compositionally biased stretch (low complexity) spans 685–694 (PAEAVSMPVP). S697 carries the phosphoserine modification. Residue T710 is modified to Phosphothreonine. Polar residues predominate over residues 737–746 (ASETSPSFSK). S741 and S753 each carry phosphoserine. Positions 757 to 773 (SEHRKQIDDLKKFKNDF) are enriched in basic and acidic residues. Positions 776 to 789 (QPSSTSESMDQLLS) are enriched in polar residues. The span at 790-813 (KNREGEKSRDLIKDKTEASAKDSF) shows a compositional bias: basic and acidic residues. A compositionally biased stretch (low complexity) spans 814-838 (IDSSSSSSNCTSGSSKTNSPSISPS). Residues S827, S828, S832, S836, S838, S859, and S860 each carry the phosphoserine modification. The segment covering 851-862 (VTSQGVQTSSPA) has biased composition (polar residues). A Glycyl lysine isopeptide (Lys-Gly) (interchain with G-Cter in SUMO2) cross-link involves residue K864. Over residues 864–881 (KQEKDDREEKKDTTEQVR) the composition is skewed to basic and acidic residues. 2 stretches are compositionally biased toward low complexity: residues 896-907 (SFSQPKPSTTPT) and 1128-1165 (GQQQSQHGGSHPAPSPVQHHQHQAAQALHLASPQQQSA).

The protein belongs to the ataxin-2 family. In terms of assembly, interacts with RBFOX1. Monomer. Can also form homodimers. Interacts with polyribosomes. Interacts with EGFR. Interacts with SH3GL3. Interacts with SH3GL2, SH3KBP1 and CBL. Interacts with ATXN2L. In terms of tissue distribution, expressed in the heart, lung, liver, kidney, skeletal muscle, spleen and intestine. Predominant expression was seen in the brain where a high level expression was found in the pyramidal cortical neurons, large brain stem neurons and cerebellar Purkinje cells. All three isoforms were found in all the tissues except skeletal muscle where only isoform 1 was found.

The protein localises to the cytoplasm. Functionally, involved in EGFR trafficking, acting as negative regulator of endocytic EGFR internalization at the plasma membrane. The sequence is that of Ataxin-2 (Atxn2) from Mus musculus (Mouse).